Consider the following 140-residue polypeptide: Nuclear receptor 2C2-associated protein (140 aa).

Belongs to the NR2C2AP family. Interacts with NR2C2/TR4.

The protein localises to the nucleus. Its function is as follows. May act as a repressor of NR2C2-mediated transactivation by suppressing the binding between NR2C2/TR4 and the TR4-response element in target genes. This chain is Nuclear receptor 2C2-associated protein (NR2C2AP), found in Bos taurus (Bovine).